The chain runs to 83 residues: Exodeoxyribonuclease 7 small subunit (83 aa).

Belongs to the XseB family. As to quaternary structure, heterooligomer composed of large and small subunits.

Its subcellular location is the cytoplasm. It catalyses the reaction Exonucleolytic cleavage in either 5'- to 3'- or 3'- to 5'-direction to yield nucleoside 5'-phosphates.. In terms of biological role, bidirectionally degrades single-stranded DNA into large acid-insoluble oligonucleotides, which are then degraded further into small acid-soluble oligonucleotides. This is Exodeoxyribonuclease 7 small subunit from Brucella melitensis biotype 1 (strain ATCC 23456 / CCUG 17765 / NCTC 10094 / 16M).